We begin with the raw amino-acid sequence, 130 residues long: Small ribosomal subunit protein uS9 (130 aa).

Belongs to the universal ribosomal protein uS9 family.

The sequence is that of Small ribosomal subunit protein uS9 from Bacillus cytotoxicus (strain DSM 22905 / CIP 110041 / 391-98 / NVH 391-98).